We begin with the raw amino-acid sequence, 137 residues long: ATP synthase epsilon chain, chloroplastic (137 aa).

Belongs to the ATPase epsilon chain family. In terms of assembly, F-type ATPases have 2 components, CF(1) - the catalytic core - and CF(0) - the membrane proton channel. CF(1) has five subunits: alpha(3), beta(3), gamma(1), delta(1), epsilon(1). CF(0) has three main subunits: a, b and c.

It is found in the plastid. The protein resides in the chloroplast thylakoid membrane. In terms of biological role, produces ATP from ADP in the presence of a proton gradient across the membrane. In Pinus thunbergii (Japanese black pine), this protein is ATP synthase epsilon chain, chloroplastic.